Consider the following 247-residue polypeptide: NAD-dependent protein deacetylase (247 aa).

Positions 1 to 247 (METFKSILHE…EFARSLGMKK (247 aa)) constitute a Deacetylase sirtuin-type domain. NAD(+) is bound by residues A20, T24, F31, R32, Q100, I102, D103, and H118. Position 31 (F31) interacts with nicotinamide. Nicotinamide is bound by residues I102 and D103. Catalysis depends on H118, which acts as the Proton acceptor. Positions 126, 129, 146, and 156 each coordinate Zn(2+). Residues T192, S193, N218, and I236 each contribute to the NAD(+) site.

Belongs to the sirtuin family. Class U subfamily. Requires Zn(2+) as cofactor.

The protein resides in the cytoplasm. The enzyme catalyses N(6)-acetyl-L-lysyl-[protein] + NAD(+) + H2O = 2''-O-acetyl-ADP-D-ribose + nicotinamide + L-lysyl-[protein]. In terms of biological role, NAD-dependent protein deacetylase which modulates the activities of several enzymes which are inactive in their acetylated form. The protein is NAD-dependent protein deacetylase of Bacillus subtilis (strain 168).